The sequence spans 52 residues: Rubredoxin (52 aa).

In terms of domain architecture, Rubredoxin-like spans 1 to 52 (MEKWQCTVCGYIYDPEVGDPTQNIPPGTKFEDLPDDWVCPDCGVGKDQFEKI). The Fe cation site is built by Cys-6, Cys-9, Cys-39, and Cys-42.

This sequence belongs to the rubredoxin family. The cofactor is Fe(3+).

Its function is as follows. Rubredoxin is a small nonheme, iron protein lacking acid-labile sulfide. Its single Fe, chelated to 4 Cys, functions as an electron acceptor and may also stabilize the conformation of the molecule. This Thermoanaerobacterium thermosaccharolyticum (strain ATCC 7956 / DSM 571 / NCIMB 9385 / NCA 3814 / NCTC 13789 / WDCM 00135 / 2032) (Clostridium thermosaccharolyticum) protein is Rubredoxin.